The following is a 138-amino-acid chain: Fluoride-specific ion channel FluC (138 aa).

A run of 4 helical transmembrane segments spans residues F34–A54, M60–M80, F88–V108, and L112–M132. Residues G95 and T98 each coordinate Na(+).

Belongs to the fluoride channel Fluc/FEX (TC 1.A.43) family.

The protein localises to the cell membrane. It carries out the reaction fluoride(in) = fluoride(out). With respect to regulation, na(+) is not transported, but it plays an essential structural role and its presence is essential for fluoride channel function. Functionally, fluoride-specific ion channel. Important for reducing fluoride concentration in the cell, thus reducing its toxicity. The chain is Fluoride-specific ion channel FluC from Corynebacterium efficiens (strain DSM 44549 / YS-314 / AJ 12310 / JCM 11189 / NBRC 100395).